The primary structure comprises 210 residues: Glutathione S-transferase P (210 aa).

The 80-residue stretch at 2-81 (PPYTVVYFPV…HLGRTLGLYG (80 aa)) folds into the GST N-terminal domain. Tyr-4 bears the Phosphotyrosine; by EGFR mark. Glutathione-binding positions include Tyr-8, Arg-14, Trp-39, Lys-45, and 52–53 (QL). Thr-62 carries the phosphothreonine modification. A glutathione-binding site is contributed by 65–66 (QS). In terms of domain architecture, GST C-terminal spans 83–204 (DQREAALVDM…ASPEHVNLPI (122 aa)). N6-succinyllysine occurs at positions 103 and 116. N6-acetyllysine is present on Lys-128.

This sequence belongs to the GST superfamily. Pi family. In terms of assembly, homodimer. Interacts with CDK5.

It is found in the cytoplasm. The protein localises to the mitochondrion. Its subcellular location is the nucleus. The enzyme catalyses RX + glutathione = an S-substituted glutathione + a halide anion + H(+). It catalyses the reaction prostaglandin J2 + glutathione = prostaglandin J2-S-(R)-glutathione. It carries out the reaction prostaglandin J2 + glutathione = prostaglandin J2-S-(S)-glutathione. The catalysed reaction is prostaglandin A2 + glutathione = prostaglandin A2-S-(S)-glutathione. The enzyme catalyses 11(S)-hydroxy-14(S),15(S)-epoxy-(5Z,8Z,12E)-eicosatrienoate + glutathione = (11S,15S)-dihydroxy-14(R)-S-glutathionyl-(5Z,8Z,12E)-eicosatrienoate. Conjugation of reduced glutathione to a wide number of exogenous and endogenous hydrophobic electrophiles. Involved in the formation of glutathione conjugates of both prostaglandin A2 (PGA2) and prostaglandin J2 (PGJ2). Participates in the formation of novel hepoxilin regioisomers. Negatively regulates CDK5 activity via p25/p35 translocation to prevent neurodegeneration. This Macaca mulatta (Rhesus macaque) protein is Glutathione S-transferase P (GSTP1).